We begin with the raw amino-acid sequence, 451 residues long: Glycylpeptide N-tetradecanoyltransferase (451 aa).

Residues 34-37 (YKFW), 167-169 (LCV), and 175-179 (SKRLT) contribute to the tetradecanoyl-CoA site. L451 acts as the Proton acceptor; via carboxylate in catalysis.

This sequence belongs to the NMT family. Monomer.

It is found in the cytoplasm. It carries out the reaction N-terminal glycyl-[protein] + tetradecanoyl-CoA = N-tetradecanoylglycyl-[protein] + CoA + H(+). Adds a myristoyl group to the N-terminal glycine residue of certain cellular proteins. This is Glycylpeptide N-tetradecanoyltransferase (NMT1) from Candida glabrata (strain ATCC 2001 / BCRC 20586 / JCM 3761 / NBRC 0622 / NRRL Y-65 / CBS 138) (Yeast).